We begin with the raw amino-acid sequence, 32 residues long: U5-ctenitoxin-Pn1a (32 aa).

Cystine bridges form between cysteine 3–cysteine 16, cysteine 9–cysteine 21, and cysteine 15–cysteine 30.

Expressed by the venom gland.

It is found in the secreted. Its function is as follows. Blocks voltage-gated sodium channels (Nav). Causes tail erection, scratching and a reduction in mobility at a dose level of 1.40 mg/mouse. The sequence is that of U5-ctenitoxin-Pn1a from Phoneutria nigriventer (Brazilian armed spider).